A 420-amino-acid chain; its full sequence is MIKIPRGTQDILPEDSKKWRYIENQLDELMTFYNYKEIRTPIFESTDLFARGVGDSTDVVQKEMYTFKDKGDRSITLRPEGTAAVVRSYIEHKMQGNPNQPIKLYYNGPMFRYERKQKGRYRQFNQFGVEAIGAENPSVDAEVLAMVMHIYQSFGLKHLKLVINSVGDMASRKEYNEALVKHFEPVIHEFCSDCQSRLHTNPMRILDCKVDRDKEAIKTAPRITDFLNEESKAYYEQVKAYLDDLGIPYIEDPNLVRGLDYYTHTAFELMMDNPNYDGAITTLCGGGRYNGLLELLDGPSETGIGFALSIERLLLALEEEGIELDIEENLDLFIVTMGDQADRYAVKLLNHLRHNGIKADKDYLQRKIKGQMKQADRLGAKFTIVIGDQELENNKIDVKNMTTGESETIELDALVEYFKK.

Belongs to the class-II aminoacyl-tRNA synthetase family. In terms of assembly, homodimer.

It is found in the cytoplasm. It carries out the reaction tRNA(His) + L-histidine + ATP = L-histidyl-tRNA(His) + AMP + diphosphate + H(+). The sequence is that of Histidine--tRNA ligase from Staphylococcus aureus (strain Mu3 / ATCC 700698).